The sequence spans 479 residues: Trigger factor (479 aa).

The region spanning 174 to 261 is the PPIase FKBP-type domain; it reads GDIAVVSFSG…LKELKTRELP (88 aa). Residues 438 to 479 are disordered; that stretch reads VLESEAKTSKPAAKSKGSKTKSTKTKTNKANTEKPASDKSKS. Residues 453-464 show a composition bias toward basic residues; the sequence is KGSKTKSTKTKT. The segment covering 468–479 has biased composition (basic and acidic residues); it reads NTEKPASDKSKS.

This sequence belongs to the FKBP-type PPIase family. Tig subfamily.

It localises to the cytoplasm. The catalysed reaction is [protein]-peptidylproline (omega=180) = [protein]-peptidylproline (omega=0). In terms of biological role, involved in protein export. Acts as a chaperone by maintaining the newly synthesized protein in an open conformation. Functions as a peptidyl-prolyl cis-trans isomerase. This chain is Trigger factor, found in Prochlorococcus marinus (strain MIT 9313).